The primary structure comprises 295 residues: Vesicle-associated protein 4-2 (295 aa).

Over residues 1-10 (MTMTEEKPTS) the composition is skewed to basic and acidic residues. The disordered stretch occupies residues 1 to 99 (MTMTEEKPTS…PSPSVSSVAK (99 aa)). The segment covering 31–53 (NAASSAATSPFPSGASSSSTSSH) has biased composition (low complexity). Basic residues predominate over residues 54–71 (LHNHHQHHHQHHHQHHHQ). Residues 83–98 (GQNQHPTPSPSVSSVA) are compositionally biased toward polar residues. In terms of domain architecture, MSP spans 107 to 229 (RLKLDPSEKL…KEQILRVIFL (123 aa)). Residues 249–263 (DAAVEARKKPPEETG) show a composition bias toward basic and acidic residues. The tract at residues 249–270 (DAAVEARKKPPEETGPKMIGEG) is disordered. S294 carries the phosphoserine modification.

It belongs to the VAMP-associated protein (VAP) (TC 9.B.17) family.

May play a role in vesicle trafficking. The sequence is that of Vesicle-associated protein 4-2 (PVA42) from Arabidopsis thaliana (Mouse-ear cress).